Reading from the N-terminus, the 27-residue chain is Protein YkiD (27 aa).

This chain is Protein YkiD, found in Escherichia coli (strain K12).